A 73-amino-acid polypeptide reads, in one-letter code: Cx9C motif-containing protein 4, mitochondrial (73 aa).

A CHCH domain is found at 2–44; sequence SNPCQKEACAIQDCLLSHQYDDAKCAKVIDQLYICCSKFYNDN. 2 short sequence motifs (cx9C motif) span residues 5-15 and 26-36; these read CQKEACAIQDC and CAKVIDQLYIC. 2 disulfide bridges follow: C5/C36 and C15/C26.

The protein belongs to the CMC4 family.

The protein localises to the mitochondrion intermembrane space. The polypeptide is Cx9C motif-containing protein 4, mitochondrial (CMC4) (Saccharomyces cerevisiae (strain ATCC 204508 / S288c) (Baker's yeast)).